Reading from the N-terminus, the 293-residue chain is Germ cell-specific gene 1-like protein 2 (293 aa).

Topologically, residues 1–8 (MDRAKQQQ) are cytoplasmic. Residues 9-29 (ALLLLPVCLALTFSLTAVVSS) traverse the membrane as a helical segment. The Extracellular segment spans residues 30–120 (HWCEGTRRVV…RSVVPAEEQG (91 aa)). N-linked (GlcNAc...) asparagine glycosylation is found at Asn59 and Asn67. The helical transmembrane segment at 121 to 141 (VLWLSIGGEVLDIVLILTSAI) threads the bilayer. Over 142-160 (LLGSRVSCRSPGFHWLRVD) the chain is Cytoplasmic. A helical transmembrane segment spans residues 161–181 (ALVAIFMVLAGLLGMVAHMMY). At 182–204 (TTIFQITVNLGPEDWKPQTWDYG) the chain is on the extracellular side. The helical transmembrane segment at 205–225 (WSYCLAWGSFALCLAVSVSAM) threads the bilayer. Residues 226 to 293 (SRFTAARLEF…PGAPGKVSIC (68 aa)) lie on the Cytoplasmic side of the membrane.

Belongs to the GSG1 family.

The protein resides in the membrane. The protein is Germ cell-specific gene 1-like protein 2 of Homo sapiens (Human).